Consider the following 254-residue polypeptide: Isoprenyl transferase (254 aa).

D23 is a catalytic residue. Residue D23 coordinates Mg(2+). Residues 24–27, W28, R36, H40, and 68–70 contribute to the substrate site; these read GNGR and STE. Residue N71 is the Proton acceptor of the active site. Residues W72, R74, R191, and 197–199 contribute to the substrate site; that span reads RIS. Residue E210 participates in Mg(2+) binding.

The protein belongs to the UPP synthase family. Homodimer. The cofactor is Mg(2+).

Its function is as follows. Catalyzes the condensation of isopentenyl diphosphate (IPP) with allylic pyrophosphates generating different type of terpenoids. The sequence is that of Isoprenyl transferase from Porphyromonas gingivalis (strain ATCC BAA-308 / W83).